A 467-amino-acid chain; its full sequence is Venom prothrombin activator omicarin-C catalytic subunit (467 aa).

The first 20 residues, 1 to 20 (MAPQLLLCLILTFLWSLPEA), serve as a signal peptide directing secretion. A propeptide spanning residues 21-40 (ESNVFLKSKVANRFLQRTKR) is cleaved from the precursor. The region spanning 41–86 (ANSLFEEFRSGNIERECIEERCSKEEAREVFEDDEKTETFWNVYVD) is the Gla domain. 4-carboxyglutamate occurs at positions 46, 47, 54, 56, 59, 60, 65, 66, 69, 72, and 75. Cysteines 57 and 62 form a disulfide. The region spanning 86–122 (DGDQCSSNPCHYRGTCKDGIGSYTCTCLFGYEGKNCE) is the EGF-like 1; calcium-binding domain. Intrachain disulfides connect Cys90–Cys101, Cys95–Cys110, Cys112–Cys121, Cys129–Cys140, Cys136–Cys149, Cys151–Cys164, Cys172–Cys329, Cys216–Cys221, Cys236–Cys252, Cys377–Cys391, and Cys402–Cys430. The O-linked (Hex...) serine glycan is linked to Ser92. In terms of domain architecture, EGF-like 2 spans 129 to 164 (CRVDNGNCWHFCKPVQNDIQCSCAEGYLLGEDGHSC). The propeptide at 182–209 (REASLPDFVQSQNATLLKKSDNPSPDIR) is activation peptide. The 245-residue stretch at 210–454 (IVNGMDCKLG…FILWIKRIMR (245 aa)) folds into the Peptidase S1 domain. The Charge relay system role is filled by His251. Asn254 carries N-linked (GlcNAc...) asparagine glycosylation. Asp309 serves as the catalytic Charge relay system. Ser406 acts as the Charge relay system in catalysis.

It belongs to the peptidase S1 family. Snake venom subfamily. Heterodimer of a light and a heavy chains; disulfide-linked. Is associated with omicarin-C non-catalytic subunit (AC Q58L90) in a non-covalent manner. Gamma-carboxyglutamate residues are formed by vitamin K dependent carboxylation. These residues are essential for the binding of calcium. As to expression, expressed by the venom gland.

The protein localises to the secreted. The catalysed reaction is Selective cleavage of Arg-|-Thr and then Arg-|-Ile bonds in prothrombin to form thrombin.. Its activity is regulated as follows. Activated by calcium and negatively charged phospholipids. In terms of biological role, snake prothrombin activator that attacks the hemostatic system of prey. This catalytic subunit is functionally similar to blood coagulation factor Xa. It requires a non-catalytic subunit present in the venom, which is similar to coagulation factor Va, to be fully active. This Oxyuranus microlepidotus (Inland taipan) protein is Venom prothrombin activator omicarin-C catalytic subunit.